The following is a 379-amino-acid chain: Glutamate 5-kinase (379 aa).

ATP is bound at residue Lys-19. Substrate-binding residues include Ser-59, Asp-146, and Asn-158. ATP contacts are provided by residues 178–179 and 220–226; these read TD and TGGMATK. The PUA domain maps to 285 to 363; sequence SGDIVIDQGA…KDIISILGYD (79 aa).

It belongs to the glutamate 5-kinase family.

Its subcellular location is the cytoplasm. It carries out the reaction L-glutamate + ATP = L-glutamyl 5-phosphate + ADP. It participates in amino-acid biosynthesis; L-proline biosynthesis; L-glutamate 5-semialdehyde from L-glutamate: step 1/2. Functionally, catalyzes the transfer of a phosphate group to glutamate to form L-glutamate 5-phosphate. The polypeptide is Glutamate 5-kinase (Vibrio vulnificus (strain YJ016)).